A 39-amino-acid polypeptide reads, in one-letter code: Photosystem II reaction center protein J (39 aa).

The chain crosses the membrane as a helical span at residues 7-27 (IPLWLVATIGGIAVLTVLGLF).

This sequence belongs to the PsbJ family. PSII is composed of 1 copy each of membrane proteins PsbA, PsbB, PsbC, PsbD, PsbE, PsbF, PsbH, PsbI, PsbJ, PsbK, PsbL, PsbM, PsbT, PsbX, PsbY, PsbZ, Psb30/Ycf12, at least 3 peripheral proteins of the oxygen-evolving complex and a large number of cofactors. It forms dimeric complexes.

It is found in the plastid. The protein resides in the chloroplast thylakoid membrane. Functionally, one of the components of the core complex of photosystem II (PSII). PSII is a light-driven water:plastoquinone oxidoreductase that uses light energy to abstract electrons from H(2)O, generating O(2) and a proton gradient subsequently used for ATP formation. It consists of a core antenna complex that captures photons, and an electron transfer chain that converts photonic excitation into a charge separation. This chain is Photosystem II reaction center protein J, found in Cyanidioschyzon merolae (strain NIES-3377 / 10D) (Unicellular red alga).